Reading from the N-terminus, the 326-residue chain is Transmembrane protein PVRIG (326 aa).

Helical transmembrane passes span L26–V46, C62–G78, and L172–L192. Y233 carries the phosphotyrosine modification. The interval A296–R326 is disordered.

In terms of assembly, interacts with NECTIN2, hence competing with CD226. Expressed in some types of immune cells. Expressed at low levels on the surface of freshly isolated T-cells and natural killer (NK) cells, predominantly on CD8+ T-cells (mainly memory/effector, but not naive cells) and on both CD16+ and CD16- NK cells. T-cell expression levels are variable among individuals. Not detected in B-cells, naive or helper T-cells, monocytes, nor neutrophils (at protein level). Not detected in dendritic cells.

It localises to the cell membrane. Its function is as follows. Cell surface receptor for NECTIN2. May act as a coinhibitory receptor that suppresses T-cell receptor-mediated signals. Following interaction with NECTIN2, inhibits T-cell proliferation. Competes with CD226 for NECTIN2-binding. The sequence is that of Transmembrane protein PVRIG (PVRIG) from Homo sapiens (Human).